Consider the following 657-residue polypeptide: Probable potassium transport system protein Kup 1 (657 aa).

The next 12 helical transmembrane spans lie at 40–60, 88–108, 135–155, 172–192, 198–218, 241–261, 282–302, 320–340, 380–400, 402–422, 432–452, and 454–474; these read VTSG…GDIG, VLSL…VLLL, WFLL…SMIT, PALE…LFAV, ALVA…IAVM, FLLS…LAVT, WMFF…ALVL, LVLP…QAVI, LLLI…NLAS, YGIA…VVIW, AAAV…ANLL, and LLEG…TIWT.

This sequence belongs to the HAK/KUP transporter (TC 2.A.72) family.

It localises to the cell inner membrane. It catalyses the reaction K(+)(in) + H(+)(in) = K(+)(out) + H(+)(out). Transport of potassium into the cell. Likely operates as a K(+):H(+) symporter. The sequence is that of Probable potassium transport system protein Kup 1 from Bradyrhizobium diazoefficiens (strain JCM 10833 / BCRC 13528 / IAM 13628 / NBRC 14792 / USDA 110).